The following is a 145-amino-acid chain: DnaJ homolog subfamily B member 3 (145 aa).

Residues 1-69 (MVDYYEVLDV…KKRDIYDRYG (69 aa)) enclose the J domain.

Expressed in sperm (at protein level).

Its function is as follows. May operate as a co-chaperone of the male germ cell- and haploid stage-specific Hsp70 proteins. The sequence is that of DnaJ homolog subfamily B member 3 (DNAJB3) from Homo sapiens (Human).